The primary structure comprises 95 residues: Ubiquinol-cytochrome-c reductase complex assembly factor 3 (95 aa).

The Mitochondrial matrix segment spans residues 1–7 (MTTLRKL). The chain crosses the membrane as a helical span at residues 8 to 28 (LLVGALLGAGAGVGTALFALV). Residues 23–80 (ALFALVTPGEERKQAMLKEMPEQYPQRRDEAARTKELLLATLQEAAATQENVAWRKNW) are mediates lipid-binding. At 29–95 (TPGEERKQAM…GGGGGGGRSA (67 aa)) the chain is on the mitochondrial intermembrane side.

Belongs to the UQCC3 family. In terms of assembly, associates with the ubiquinol-cytochrome c reductase complex (mitochondrial respiratory chain complex III(CIII) or cytochrome b-c1 complex). Interacts with UQCC1. Forms a complex, named COMC, composed of UQCC1, UQCC2; UQCC3 and UQCC4; mediates MT-CYB hemylation and association with the first nuclear-encoded complex III subunit UQCRQ. Post-translationally, probably cleaved by OMA1 under mitochondrial stress conditions.

Its subcellular location is the mitochondrion inner membrane. Required for the assembly of the ubiquinol-cytochrome c reductase complex (mitochondrial respiratory chain complex III or cytochrome b-c1 complex), mediating cytochrome b recruitment and probably stabilization within the complex. Thereby, plays an important role in ATP production by mitochondria. Cardiolipin-binding protein, it may also control the cardiolipin composition of mitochondria membranes and their morphology. This is Ubiquinol-cytochrome-c reductase complex assembly factor 3 from Bos taurus (Bovine).